Consider the following 109-residue polypeptide: Small ribosomal subunit protein bS18c (109 aa).

The disordered stretch occupies residues 82–109 (GFERSESTPRTNALKPRNKNKQNNQTQF).

This sequence belongs to the bacterial ribosomal protein bS18 family. In terms of assembly, part of the 30S ribosomal subunit.

Its subcellular location is the plastid. The chain is Small ribosomal subunit protein bS18c from Cuscuta reflexa (Southern Asian dodder).